A 266-amino-acid chain; its full sequence is Small ribosomal subunit protein uS2 (266 aa).

It belongs to the universal ribosomal protein uS2 family.

This is Small ribosomal subunit protein uS2 from Bartonella tribocorum (strain CIP 105476 / IBS 506).